Consider the following 976-residue polypeptide: Dibasic-processing endoprotease (976 aa).

Residues 1 to 17 form the signal peptide; sequence MLRKFILGLLLASQAVA. N-linked (GlcNAc...) asparagine glycosylation is present at N156. Residues 172 to 212 are compositionally biased toward basic and acidic residues; sequence AEEAQKAQDDKGDKKEDQKDDKKEGQEAQKEGDKEDNKGDD. Residues 172–246 are disordered; that stretch reads AEEAQKAQDD…VQWKPVDESM (75 aa). Over residues 213 to 231 the composition is skewed to acidic residues; sequence KEDGEEDDDDDEDEDDDDA. Residues 277-595 form the Peptidase S8 domain; that stretch reads QWYLHNVHKA…YGKLDASKIV (319 aa). N-linked (GlcNAc...) asparagine glycosylation is found at N291 and N299. Catalysis depends on D311, which acts as the Charge relay system. An N-linked (GlcNAc...) asparagine glycan is attached at N336. Active-site charge relay system residues include H349 and S528. A helical membrane pass occupies residues 524 to 544; sequence HGGTSAAAPLAAGVFALALSV. In terms of domain architecture, P/Homo B spans 604-737; it reads VNNQTSFHSE…QLNVFGEQKD (134 aa). A glycan (N-linked (GlcNAc...) asparagine) is linked at N606. The disordered stretch occupies residues 733–848; that stretch reads GEQKDKREEN…SDSHTSWWPD (116 aa). Over residues 734–830 the composition is skewed to basic and acidic residues; it reads EQKDKREENK…EEKPEEKPVD (97 aa). Residues 855 to 875 form a helical membrane-spanning segment; it reads AWLYGAVLLVGGFIAVIGIYA. N886 carries N-linked (GlcNAc...) asparagine glycosylation. The disordered stretch occupies residues 914–976; the sequence is PEDTHRRSGD…RDNDRQNLLG (63 aa). Basic and acidic residues-rich tracts occupy residues 915-928 and 940-976; these read EDTHRRSGDNDRLY and MFRISDEGEDAHDVEPELNRVSMEADKRDNDRQNLLG.

This sequence belongs to the peptidase S8 family. Furin subfamily.

Its subcellular location is the membrane. The protein is Dibasic-processing endoprotease (XPR6) of Yarrowia lipolytica (strain CLIB 122 / E 150) (Yeast).